Consider the following 677-residue polypeptide: Methionine--tRNA ligase (677 aa).

Residues 15-25 (PYANGSIHLGH) carry the 'HIGH' region motif. Residues C146, C149, C159, and C162 each coordinate Zn(2+). A 'KMSKS' region motif is present at residues 333–337 (KMSKS). Residue K336 coordinates ATP. Residues 575-677 (DFAKIDLRVA…DGAKPGQQVK (103 aa)) enclose the tRNA-binding domain.

The protein belongs to the class-I aminoacyl-tRNA synthetase family. MetG type 1 subfamily. In terms of assembly, homodimer. The cofactor is Zn(2+).

Its subcellular location is the cytoplasm. It catalyses the reaction tRNA(Met) + L-methionine + ATP = L-methionyl-tRNA(Met) + AMP + diphosphate. In terms of biological role, is required not only for elongation of protein synthesis but also for the initiation of all mRNA translation through initiator tRNA(fMet) aminoacylation. This chain is Methionine--tRNA ligase, found in Salmonella typhi.